We begin with the raw amino-acid sequence, 207 residues long: Ribosomal RNA large subunit methyltransferase E (207 aa).

S-adenosyl-L-methionine-binding residues include glycine 51, tryptophan 53, aspartate 69, aspartate 85, and aspartate 108. The active-site Proton acceptor is the lysine 148.

The protein belongs to the class I-like SAM-binding methyltransferase superfamily. RNA methyltransferase RlmE family.

It is found in the cytoplasm. It carries out the reaction uridine(2552) in 23S rRNA + S-adenosyl-L-methionine = 2'-O-methyluridine(2552) in 23S rRNA + S-adenosyl-L-homocysteine + H(+). In terms of biological role, specifically methylates the uridine in position 2552 of 23S rRNA at the 2'-O position of the ribose in the fully assembled 50S ribosomal subunit. This is Ribosomal RNA large subunit methyltransferase E from Methanospirillum hungatei JF-1 (strain ATCC 27890 / DSM 864 / NBRC 100397 / JF-1).